The chain runs to 585 residues: Probable G-protein coupled receptor Mth-like 10 (585 aa).

The signal sequence occupies residues 1 to 32 (MPKKIHQPGGSLYCGVTLLGVLCLVVFRLIPG). Residues 33 to 250 (IPFGTYVMAE…DHSTVKIINS (218 aa)) lie on the Extracellular side of the membrane. 5 disulfide bridges follow: cysteine 56-cysteine 110, cysteine 112-cysteine 117, cysteine 121-cysteine 216, cysteine 122-cysteine 135, and cysteine 177-cysteine 236. Residues asparagine 63 and asparagine 72 are each glycosylated (N-linked (GlcNAc...) asparagine). 5 N-linked (GlcNAc...) asparagine glycosylation sites follow: asparagine 142, asparagine 152, asparagine 157, asparagine 198, and asparagine 223. The chain crosses the membrane as a helical span at residues 251–271 (YAMMFSIPFMMLTIAVYLLIP). Residues 272 to 280 (ELRNQHGKS) lie on the Cytoplasmic side of the membrane. The chain crosses the membrane as a helical span at residues 281 to 301 (LVCYLIGLSVGYSSLCYVQLY). Over 302 to 312 (QVDATGVTCKV) the chain is Extracellular. A helical membrane pass occupies residues 313-333 (FGYTAYFFFMGAYMWLSVISF). Residues 334-353 (DLWHNFRGTRGINRFQEKKR) are Cytoplasmic-facing. The chain crosses the membrane as a helical span at residues 354–374 (FLFYSLYSWGIALVFLAFTYC). Topologically, residues 375 to 404 (AQQLTNLPANLKPGIGDGVYCWLDMSNWAA) are extracellular. Residues 405-425 (MIYFYGPILAIVVANTIMFIM) traverse the membrane as a helical segment. The Cytoplasmic portion of the chain corresponds to 426 to 466 (TAIKIHGVQREMARIIASENSTKNLRTEKDKRFYRAWSNYR). The helical transmembrane segment at 467–487 (FGLFLRLFLIMGITWLTELIS) threads the bilayer. The Extracellular segment spans residues 488–498 (YFVGSDKGWSK). Residues 499 to 519 (LFYISDLANAMQGFLIFMLFV) traverse the membrane as a helical segment. At 520–585 (MKKKVKHLIT…VDPQKTTIFR (66 aa)) the chain is on the cytoplasmic side.

Belongs to the G-protein coupled receptor 2 family. Mth subfamily.

It is found in the cell membrane. This chain is Probable G-protein coupled receptor Mth-like 10 (mthl10), found in Drosophila melanogaster (Fruit fly).